The chain runs to 828 residues: E3 ubiquitin-protein ligase bre-1 (828 aa).

A disordered region spans residues 1–25 (MMKRNNEGIGGEGVANSPPDDTQQK). Residues 1-309 (MMKRNNEGIG…SREIEALRAD (309 aa)) are interaction with ubc-1. 2 coiled-coil regions span residues 53–92 (QAAK…FLKV) and 185–251 (HKEL…TEKQ). The segment covering 269–298 (ASGNATASSSATLNQSEKKMGSPGSPPSES) has biased composition (low complexity). A disordered region spans residues 269-304 (ASGNATASSSATLNQSEKKMGSPGSPPSESTSREIE). Coiled coils occupy residues 311 to 345 (DEQA…KMET), 460 to 616 (VNTL…RNLK), and 660 to 756 (DEVL…NDSA). The RING-type zinc finger occupies 776–815 (CPSCKTRPKDCIMLKCYHLFCETCIKTMYDTRQRKCPKCN).

This sequence belongs to the BRE1 family. In terms of assembly, interacts with ubc-1. Interacts with mrg-1.

Its subcellular location is the nucleus. It carries out the reaction S-ubiquitinyl-[E2 ubiquitin-conjugating enzyme]-L-cysteine + [acceptor protein]-L-lysine = [E2 ubiquitin-conjugating enzyme]-L-cysteine + N(6)-ubiquitinyl-[acceptor protein]-L-lysine.. It functions in the pathway protein modification; protein ubiquitination. Functionally, E3 ubiquitin-protein ligase that mediates monoubiquitination of 'Lys-117' of histone H2B. H2B 'Lys-117' ubiquitination gives a specific tag for epigenetic transcriptional activation and is also prerequisite for histone H3 'Lys-4' and 'Lys-79' methylation. Involved in regulating stem cell proliferative fate. This Caenorhabditis briggsae protein is E3 ubiquitin-protein ligase bre-1.